The primary structure comprises 456 residues: KAGVGFKAGVKDYRLTYYTPDYETKDTDILAAFRVTPQPGVPAEEAGAAVAAESSTGTWTTVWTDGLTSLDRYKGRCYHIEAVVGEENQFIAYVAYPLDLFEEGSVTNMFTSIVGNVFGFKALRALRLEDLRIPPSYSKTFQGPPHGIQVERDKLNKYGRPLLGCTIKPKLGLSAKNYGRAVYECLRGGLDFTKDDENVNSQPFMRWRDRFVFCAEAIYKAQAETGEIKGHYLNATAGTCEEMIKRAVFARELGAPIVMHDYLTGGFTANTSLAHYCRDNGLLLHIHRAMHAVIDRQKNHGMHFRVLAKALRMSGGDHIHAGTVVGKLEGEREMTLGFVDLLRDDFIEKDRSRGIFFTQDWVSMPGVIPVASGGIHVWHMPALTEIFGDDSVLQFGGGTLGHPWGNAPGAVANRVALEACVQARNEGRDLAREGNEIIREAAKWSPELAAACEVWK.

K7 is subject to N6,N6,N6-trimethyllysine. 2 residues coordinate substrate: N116 and T166. The active-site Proton acceptor is K168. K170 is a substrate binding site. Positions 194, 196, and 197 each coordinate Mg(2+). K194 is subject to N6-carboxylysine. H287 functions as the Proton acceptor in the catalytic mechanism. Residues R288, H320, and S372 each coordinate substrate.

It belongs to the RuBisCO large chain family. Type I subfamily. As to quaternary structure, heterohexadecamer of 8 large chains and 8 small chains; disulfide-linked. The disulfide link is formed within the large subunit homodimers. Mg(2+) is required as a cofactor. Post-translationally, the disulfide bond which can form in the large chain dimeric partners within the hexadecamer appears to be associated with oxidative stress and protein turnover.

Its subcellular location is the plastid. It localises to the chloroplast. The enzyme catalyses 2 (2R)-3-phosphoglycerate + 2 H(+) = D-ribulose 1,5-bisphosphate + CO2 + H2O. The catalysed reaction is D-ribulose 1,5-bisphosphate + O2 = 2-phosphoglycolate + (2R)-3-phosphoglycerate + 2 H(+). RuBisCO catalyzes two reactions: the carboxylation of D-ribulose 1,5-bisphosphate, the primary event in carbon dioxide fixation, as well as the oxidative fragmentation of the pentose substrate in the photorespiration process. Both reactions occur simultaneously and in competition at the same active site. The polypeptide is Ribulose bisphosphate carboxylase large chain (Barnardia japonica (Chinese squill)).